The chain runs to 442 residues: Cell adhesion molecule 1 (442 aa).

Residues 1–44 (MASVVLPSGSQCAAAAAAAAPPGLRLRLLLLLFSAAALIPTGDG) form the signal peptide. The Ig-like V-type domain maps to 45–139 (QNLFTKDVTV…PPQESYTTIT (95 aa)). The Extracellular segment spans residues 45–374 (QNLFTKDVTV…EEGSIRAVDH (330 aa)). A disulfide bond links Cys64 and Cys124. Asn67, Asn101, Asn113, and Asn165 each carry an N-linked (GlcNAc...) asparagine glycan. Ig-like C2-type domains are found at residues 144–238 (PRNL…RYLE) and 243–329 (PQVH…YMLY). Intrachain disulfides connect Cys166–Cys220 and Cys267–Cys313. N-linked (GlcNAc...) asparagine glycosylation is found at Asn304 and Asn308. The chain crosses the membrane as a helical span at residues 375 to 395 (AVIGGVVAVVVFAMLCLLIIL). Residues 396 to 442 (GRYFARHKGTYFTHEAKGADDAADADTAIINAEGGQNNSEEKKEYFI) are Cytoplasmic-facing. Thr422 carries the phosphothreonine modification. Ser434 is subject to Phosphoserine.

This sequence belongs to the nectin family. In terms of assembly, homodimer (via Ig-like V-type domain). Interacts with FARP1. Interacts (via Ig-like V-type domain) with CRTAM (via Ig-like V-type domain); the interaction competes with CRTAM homodimerization and CADM1 homodimerization. Interacts (via C-terminus) with EPB41L3/DAL1. The interaction with EPB41L3/DAL1 may act to anchor CADM1 to the actin cytoskeleton. Interacts (via C-terminus) with MPP2 (via PDZ domain). Interacts (via C-terminus) with MPP3 (via PDZ domain); this interaction connects CADM1 with DLG1. Interacts (via C-terminus) with PALS2 (via PDZ domain). As to quaternary structure, (Microbial infection) Interacts with herpes virus 8 proteins vFLIP and vGPCR; these interactions are essential for NF-kappa-B activation. Post-translationally, glycosylation at Asn-67 and Asn-101 promotes adhesive binding and synapse induction.

The protein localises to the cell membrane. The protein resides in the synapse. Functionally, mediates homophilic cell-cell adhesion in a Ca(2+)-independent manner. Also mediates heterophilic cell-cell adhesion with CADM3 and NECTIN3 in a Ca(2+)-independent manner. Interaction with CRTAM promotes natural killer (NK) cell cytotoxicity and interferon-gamma (IFN-gamma) secretion by CD8+ cells in vitro as well as NK cell-mediated rejection of tumors expressing CADM1 in vivo. In mast cells, may mediate attachment to and promote communication with nerves. CADM1, together with MITF, is essential for development and survival of mast cells in vivo. By interacting with CRTAM and thus promoting the adhesion between CD8+ T-cells and CD8+ dendritic cells, regulates the retention of activated CD8+ T-cell within the draining lymph node. Required for the intestinal retention of intraepithelial CD4+ CD8+ T-cells and, to a lesser extent, intraepithelial and lamina propria CD8+ T-cells and CD4+ T-cells. Interaction with CRTAM promotes the adhesion to gut-associated CD103+ dendritic cells, which may facilitate the expression of gut-homing and adhesion molecules on T-cells and the conversion of CD4+ T-cells into CD4+ CD8+ T-cells. Acts as a synaptic cell adhesion molecule and plays a role in the formation of dendritic spines and in synapse assembly. May be involved in neuronal migration, axon growth, pathfinding, and fasciculation on the axons of differentiating neurons. May play diverse roles in the spermatogenesis including in the adhesion of spermatocytes and spermatids to Sertoli cells and for their normal differentiation into mature spermatozoa. Acts as a tumor suppressor in non-small-cell lung cancer (NSCLC) cells. May contribute to the less invasive phenotypes of lepidic growth tumor cells. Its function is as follows. (Microbial infection) Induces cell fusion in neuron infected by a neuropathogenic strain of measles. Interacts with measles hemagglutinin to trigger hyperfusogenic F-mediated membrane fusion and presumably transsynaptic cell-to-cell transmission of the virus. The chain is Cell adhesion molecule 1 from Homo sapiens (Human).